A 167-amino-acid chain; its full sequence is Fimbrial adapter PapF (167 aa).

Residues 1 to 18 (MIRLSLFISLLLTSVAVL) form the signal peptide.

It is found in the secreted. The protein localises to the fimbrium. Functionally, adapter that links the PapG adhesin to the distal end of the tip fibrillum. PapF is required for the correct presentation of the adhesin at the distal end of the tip fibrillum. Pili are polar filaments radiating from the surface of the bacterium to a length of 0.5-1.5 micrometers and numbering 100-300 per cell, and enable bacteria to colonize the epithelium of specific host organs. In Escherichia coli, this protein is Fimbrial adapter PapF (papF).